Consider the following 134-residue polypeptide: Global transcriptional regulator Spx (134 aa).

Cys-10 and Cys-13 are joined by a disulfide.

Belongs to the ArsC family. Spx subfamily. As to quaternary structure, interacts with the C-terminal domain of the alpha subunit of the RNAP.

The protein resides in the cytoplasm. Its function is as follows. Global transcriptional regulator that plays a key role in stress response and exerts either positive or negative regulation of genes. Acts by interacting with the C-terminal domain of the alpha subunit of the RNA polymerase (RNAP). This interaction can enhance binding of RNAP to the promoter region of target genes and stimulate their transcription, or block interaction of RNAP with activator. In Streptococcus pyogenes serotype M3 (strain ATCC BAA-595 / MGAS315), this protein is Global transcriptional regulator Spx.